A 406-amino-acid polypeptide reads, in one-letter code: Peptidase T (406 aa).

A Zn(2+)-binding site is contributed by H80. The active site involves D82. Position 141 (D141) interacts with Zn(2+). Residue E175 is the Proton acceptor of the active site. Zn(2+)-binding residues include E176, D198, and H380.

The protein belongs to the peptidase M20B family. Zn(2+) serves as cofactor.

The protein localises to the cytoplasm. The enzyme catalyses Release of the N-terminal residue from a tripeptide.. In terms of biological role, cleaves the N-terminal amino acid of tripeptides. The protein is Peptidase T of Streptococcus mutans serotype c (strain ATCC 700610 / UA159).